Consider the following 386-residue polypeptide: Diels-Alderase phm7 (386 aa).

Residues 1-223 (MSEPTSSSSL…MVRGWSARPW (223 aa)) are beta-sandwich motif. Substrate contacts are provided by Glu-51, Asn-84, and Lys-356. Residues 223–386 (WPTFMNDAYY…FGGQLQIPVP (164 aa)) form a beta-barrel motif region.

This sequence belongs to the Diels-Alderase family.

The protein operates within secondary metabolite biosynthesis. 3-aminomethyl-p-menthane which is similar to the phomasetin substructure, dose-dependently inhibits phm7 activity in vitro and production of phomasetin in the fungus. Functionally, diels-Alderase; part of the gene cluster that mediates the biosynthesis of the trans-fused decalin-containing tetramic acid phomasetin, the stereochemical opposite of the HIV-1 integrase inhibitor equisetin. The PKS module of phm1 together with the enoylreductase phm4 catalyze the formation of the polyketide unit which is then conjugated to L-serine by the condensation domain of the phm1 NRPS module. Activity of the Dieckmann cyclase domain (RED) of phm1 results in release of the Dieckmann product intermediate. The Diels-Alderase phm7 then uses the Dieckmann product of phm1 as substrate and catalyzes the Diels-Alder cycloaddition to form the decalin ring of N-desmethylphomasetin. N-desmethylphomasetin is further methylated to phomasetin by the methyltransferase phm5. The chain is Diels-Alderase phm7 from Pyrenochaetopsis sp.